Here is a 144-residue protein sequence, read N- to C-terminus: Cytochrome c oxidase subunit 4 isoform 1, mitochondrial (144 aa).

Residues Ser1–Asn73 lie on the Mitochondrial matrix side of the membrane. Lys4 is subject to N6-acetyllysine; alternate. At Lys4 the chain carries N6-succinyllysine; alternate. Lys28 is modified (N6-acetyllysine). Phosphoserine occurs at positions 31 and 33. Lys35 bears the N6-acetyllysine; alternate mark. Lys35 carries the post-translational modification N6-succinyllysine; alternate. Lys42 carries the post-translational modification N6-acetyllysine. The chain crosses the membrane as a helical span at residues Glu74–Tyr99. The Mitochondrial intermembrane portion of the chain corresponds to Val100–Lys144.

Belongs to the cytochrome c oxidase IV family. In terms of assembly, component of the cytochrome c oxidase (complex IV, CIV), a multisubunit enzyme composed of 14 subunits. The complex is composed of a catalytic core of 3 subunits MT-CO1, MT-CO2 and MT-CO3, encoded in the mitochondrial DNA, and 11 supernumerary subunits COX4I, COX5A, COX5B, COX6A, COX6B, COX6C, COX7A, COX7B, COX7C, COX8 and NDUFA4, which are encoded in the nuclear genome. The complex exists as a monomer or a dimer and forms supercomplexes (SCs) in the inner mitochondrial membrane with NADH-ubiquinone oxidoreductase (complex I, CI) and ubiquinol-cytochrome c oxidoreductase (cytochrome b-c1 complex, complex III, CIII), resulting in different assemblies (supercomplex SCI(1)III(2)IV(1) and megacomplex MCI(2)III(2)IV(2)). Interacts with PHB2; the interaction decreases in absence of SPHK2. Interacts with AFG1L. Interacts with ABCB7; this interaction allows the regulation of cellular iron homeostasis and cellular reactive oxygen species (ROS) levels in cardiomyocytes. Interacts with FLVCR2; this interaction occurs in the absence of heme and is disrupted upon heme binding. Interacts with IRGC.

The protein resides in the mitochondrion inner membrane. Its pathway is energy metabolism; oxidative phosphorylation. Its function is as follows. Component of the cytochrome c oxidase, the last enzyme in the mitochondrial electron transport chain which drives oxidative phosphorylation. The respiratory chain contains 3 multisubunit complexes succinate dehydrogenase (complex II, CII), ubiquinol-cytochrome c oxidoreductase (cytochrome b-c1 complex, complex III, CIII) and cytochrome c oxidase (complex IV, CIV), that cooperate to transfer electrons derived from NADH and succinate to molecular oxygen, creating an electrochemical gradient over the inner membrane that drives transmembrane transport and the ATP synthase. Cytochrome c oxidase is the component of the respiratory chain that catalyzes the reduction of oxygen to water. Electrons originating from reduced cytochrome c in the intermembrane space (IMS) are transferred via the dinuclear copper A center (CU(A)) of subunit 2 and heme A of subunit 1 to the active site in subunit 1, a binuclear center (BNC) formed by heme A3 and copper B (CU(B)). The BNC reduces molecular oxygen to 2 water molecules using 4 electrons from cytochrome c in the IMS and 4 protons from the mitochondrial matrix. The sequence is that of Cytochrome c oxidase subunit 4 isoform 1, mitochondrial (COX4I1) from Gorilla gorilla gorilla (Western lowland gorilla).